A 349-amino-acid chain; its full sequence is Isopentenyl-diphosphate delta-isomerase (349 aa).

9-10 (RK) lines the substrate pocket. Residues 65–67 (AMT), Ser-95, and Asn-124 each bind FMN. 95–97 (STH) serves as a coordination point for substrate. Gln-154 is a substrate binding site. Residue Glu-155 coordinates Mg(2+). FMN contacts are provided by residues Lys-186, Ser-211, Thr-216, 262 to 264 (GLR), and 283 to 284 (SR).

This sequence belongs to the IPP isomerase type 2 family. In terms of assembly, homooctamer. Dimer of tetramers. FMN serves as cofactor. NADPH is required as a cofactor. It depends on Mg(2+) as a cofactor.

The protein localises to the cytoplasm. It catalyses the reaction isopentenyl diphosphate = dimethylallyl diphosphate. Functionally, involved in the biosynthesis of isoprenoids. Catalyzes the 1,3-allylic rearrangement of the homoallylic substrate isopentenyl (IPP) to its allylic isomer, dimethylallyl diphosphate (DMAPP). In Staphylococcus epidermidis (strain ATCC 35984 / DSM 28319 / BCRC 17069 / CCUG 31568 / BM 3577 / RP62A), this protein is Isopentenyl-diphosphate delta-isomerase.